A 1492-amino-acid polypeptide reads, in one-letter code: Putative leucine-rich repeat-containing protein DDB_G0290503 (1492 aa).

Positions 2-111 (SILLEGYLEK…WIEGIKDAIK (110 aa)) constitute a PH domain. LRR repeat units follow at residues 123-144 (LDGLIKTKDNDIIKLREKIKHL), 180-204 (IKSLTLQLSSKDESMKSLEKQVEKL), 258-284 (QESLNEIKDENNDLQSLIDTQKQQFEK), 329-351 (KNQFSTKLQLVNNEIQSLKSIVD), 352-375 (DKLKEIQLKDNQLTQLNQQHEIDN), 389-413 (ISKISNQLNEKDNKIQELSKQSIDK), 439-462 (LEKLNDINQLSNKLQDKENQILEI), 519-543 (INELQSNLNENQNKINELIENNQSS), 551-575 (LNQLSDKLQEKDEKLKSLESSIIER), 579-603 (IDQLQDNLNEKQDKINELVENNESS), 632-656 (INELQSNLNENQNKINELIENNQSS), 728-752 (LDELQSKLNEKQNEINQLIENNQSS), 806-830 (LKSLDSIIIENQEKLVQLTKSNQDS), 831-855 (LDELQSKLNEKQNEINELIENNQSS), 895-919 (INELQSKLNEKQNKINELVENNESS), 927-951 (LIQLSDQLQEKENQLKSFESSIIER), 955-979 (LNQLQSKLNEKQNEIDQITENNQSS), 1013-1036 (NEKLNEINEKDNKINELIQTNESL), 1044-1068 (FENLEQELEEKNNKILDLNSQIIDV), 1138-1164 (LQDLENELNLEKDTVNEKNDDINELKE), and 1210-1232 (NAHLKINEKDNEIHSLSKEGFNE). A disordered region spans residues 1272–1292 (RSSSSSLHQQQQMISPDLSNS). Residues 1274–1286 (SSSSLHQQQQMIS) show a composition bias toward low complexity. 2 LRR repeats span residues 1424 to 1444 (SSEKLQSIQLEIDTIREKYFF) and 1445 to 1468 (AIARSLKLQGAQMGWSMSRSIFDM).

The chain is Putative leucine-rich repeat-containing protein DDB_G0290503 from Dictyostelium discoideum (Social amoeba).